The following is a 112-amino-acid chain: ATP synthase epsilon chain (112 aa).

This sequence belongs to the ATPase epsilon chain family. As to quaternary structure, F-type ATPases have 2 components, CF(1) - the catalytic core - and CF(0) - the membrane proton channel. CF(1) has five subunits: alpha(3), beta(3), gamma(1), delta(1), epsilon(1). CF(0) has three main subunits: a, b and c.

The protein localises to the cell inner membrane. In terms of biological role, produces ATP from ADP in the presence of a proton gradient across the membrane. The sequence is that of ATP synthase epsilon chain from Rickettsia peacockii (strain Rustic).